A 511-amino-acid chain; its full sequence is Maturase K (511 aa).

This sequence belongs to the intron maturase 2 family. MatK subfamily.

The protein localises to the plastid. The protein resides in the chloroplast. In terms of biological role, usually encoded in the trnK tRNA gene intron. Probably assists in splicing its own and other chloroplast group II introns. The protein is Maturase K of Hordeum murinum subsp. leporinum (Mouse barley).